We begin with the raw amino-acid sequence, 209 residues long: Uracil phosphoribosyltransferase (209 aa).

Residues Arg79, Arg104, and 131–139 contribute to the 5-phospho-alpha-D-ribose 1-diphosphate site; that span reads DPMLATGNS. Residues Ile194 and 199–201 each bind uracil; that span reads GDA. Asp200 is a 5-phospho-alpha-D-ribose 1-diphosphate binding site.

The protein belongs to the UPRTase family. Requires Mg(2+) as cofactor.

It carries out the reaction UMP + diphosphate = 5-phospho-alpha-D-ribose 1-diphosphate + uracil. The protein operates within pyrimidine metabolism; UMP biosynthesis via salvage pathway; UMP from uracil: step 1/1. With respect to regulation, allosterically activated by GTP. In terms of biological role, catalyzes the conversion of uracil and 5-phospho-alpha-D-ribose 1-diphosphate (PRPP) to UMP and diphosphate. This Polaromonas naphthalenivorans (strain CJ2) protein is Uracil phosphoribosyltransferase.